The sequence spans 151 residues: 3-hydroxyacyl-[acyl-carrier-protein] dehydratase FabZ (151 aa).

Residue H53 is part of the active site.

This sequence belongs to the thioester dehydratase family. FabZ subfamily.

It localises to the cytoplasm. The enzyme catalyses a (3R)-hydroxyacyl-[ACP] = a (2E)-enoyl-[ACP] + H2O. In terms of biological role, involved in unsaturated fatty acids biosynthesis. Catalyzes the dehydration of short chain beta-hydroxyacyl-ACPs and long chain saturated and unsaturated beta-hydroxyacyl-ACPs. This is 3-hydroxyacyl-[acyl-carrier-protein] dehydratase FabZ from Erythrobacter litoralis (strain HTCC2594).